Consider the following 76-residue polypeptide: Putative phosphotransferase enzyme IIA component YyzE (76 aa).

One can recognise a PTS EIIA type-1 domain in the interval Met-1–Ser-76. Residue His-22 is the Tele-phosphohistidine intermediate of the active site.

Its subcellular location is the cytoplasm. Its function is as follows. The phosphoenolpyruvate-dependent sugar phosphotransferase system (PTS), a major carbohydrate active -transport system, catalyzes the phosphorylation of incoming sugar substrates concomitant with their translocation across the cell membrane. This Bacillus subtilis (strain 168) protein is Putative phosphotransferase enzyme IIA component YyzE (yyzE).